The primary structure comprises 245 residues: DNA polymerase III subunit epsilon (245 aa).

Residues D11 and E13 each coordinate a divalent metal cation. Substrate-binding residues include D11, E13, Q60, and H65. H161 acts as the Proton acceptor in catalysis. Position 166 (D166) interacts with a divalent metal cation. D166 contributes to the substrate binding site.

As to quaternary structure, the DNA polymerase holoenzyme is a complex that contains 10 different types of subunits. These subunits are organized into 3 functionally essential subassemblies: the pol III core, the beta sliding clamp processivity factor and the clamp-loading complex. The pol III core (subunits alpha,epsilon and theta) contains the polymerase and the 3'-5' exonuclease proofreading activities. The polymerase is tethered to the template via the sliding clamp processivity factor. The clamp-loading complex assembles the beta processivity factor onto the primer template and plays a central role in the organization and communication at the replication fork. This complex contains delta, delta', psi and chi, and copies of either or both of two different DnaX proteins, gamma and tau. The composition of the holoenzyme is, therefore: (alpha,epsilon,theta)[2]-(gamma/tau)[3]-delta,delta', psi,chi-beta[4]. Mg(2+) serves as cofactor. It depends on Mn(2+) as a cofactor.

It carries out the reaction DNA(n) + a 2'-deoxyribonucleoside 5'-triphosphate = DNA(n+1) + diphosphate. Its function is as follows. DNA polymerase III is a complex, multichain enzyme responsible for most of the replicative synthesis in bacteria. The epsilon subunit contain the editing function and is a proofreading 3'-5' exonuclease. This Buchnera aphidicola subsp. Baizongia pistaciae (strain Bp) protein is DNA polymerase III subunit epsilon (dnaQ).